The chain runs to 480 residues: Alpha,alpha-trehalose-phosphate synthase [UDP-forming] 2 (480 aa).

The D-glucose 6-phosphate site is built by tyrosine 97 and aspartate 151. Residues arginine 288 and lysine 293 each contribute to the UDP site. Residues arginine 288 and lysine 293 each coordinate UDP-alpha-D-glucose. Arginine 326 contributes to the D-glucose 6-phosphate binding site. 387–395 contacts UDP-alpha-D-glucose; that stretch reads DGMNLVSFE. 391–395 provides a ligand contact to UDP; sequence LVSFE.

It belongs to the glycosyltransferase 20 family.

The catalysed reaction is D-glucose 6-phosphate + UDP-alpha-D-glucose = alpha,alpha-trehalose 6-phosphate + UDP + H(+). It functions in the pathway carbohydrate biosynthesis. In terms of biological role, synthase catalytic subunit of the trehalose synthase complex that catalyzes the production of trehalose from glucose-6-phosphate and UDP-alpha-D-glucose in a two step process. The protein is Alpha,alpha-trehalose-phosphate synthase [UDP-forming] 2 of Aspergillus niger.